Here is an 867-residue protein sequence, read N- to C-terminus: Probable alpha,alpha-trehalose-phosphate synthase [UDP-forming] 9 (867 aa).

S5 bears the Phosphoserine mark. At T32 the chain carries Phosphothreonine. The tract at residues E59–R546 is glycosyltransferase.

The protein in the N-terminal section; belongs to the glycosyltransferase 20 family. This sequence in the C-terminal section; belongs to the trehalose phosphatase family.

The enzyme catalyses D-glucose 6-phosphate + UDP-alpha-D-glucose = alpha,alpha-trehalose 6-phosphate + UDP + H(+). The sequence is that of Probable alpha,alpha-trehalose-phosphate synthase [UDP-forming] 9 (TPS9) from Arabidopsis thaliana (Mouse-ear cress).